The following is a 1468-amino-acid chain: MAKIALPRKFFGRRFEVLEPPYLLSIPKNSFENFVQLKVNPYKRKNVGLEHIFRTSFPFKDPDENFILEYLGYEIGDWECNRCGYKPKDDLLGGWDVDCPQCGAKLVYKEKFTPEECKLKGLTYSAPLRVMLQLKAKTKNGYREFPPKKVYFGEIPLMTETGSFIINGTERIIINQLIRSSGVFFDEKEEKQKDATITRILYRGSIIPDKGSRVEFELSGATDLISARIDRKKLSATAVLRAFGLETAYDILKYFYEDVRKFIVKDKYLYDAQTGEEFTPEDLEHHYIFAIIKFRGKLVGFASSKERDFIEERYIEEWEDLVRLLDDDRIEVLSVTAVPRDVVIKSPYGKSLIDTLANDTSPKDVDKRSPVKVPAEYTLRDYGLMEMYKRLRHIEAITMEIDSVIERARIFFNVFFRDLKRYDLSRVGRVKINAKVHRIPKVLKPADVDLLDQLPPLALAEDYGEYKAGTRVTKDLLKELFKQYKEIKVKDYTEDEARFILPIDLVNILKYLIDLRHGRVKKDDIAHLGNRRVRSVGELLENQARLGIAKMEKVFRDRSAVINPEQPDLKPQDFINPRYVTTAITDFLKTGQLSQYLDNTNPLSELTHKRRLSALGPGGLTRESAKFEIRDVHPSHYGRICPIETPEGQNIGLVTSPTVYARVNEYGFLITPYRKVENGKVTDKIEWLAAYEEENYVIAQSTPTDEEGRLKAEFILARHKNDIRLVKPEQVEYIDVSPRQVISPSSSLIPFLEHDDANRALMGSNMQRQAVPLIFTQAPLIGTGMEKKIARDSHAVVVAKRGGVVEEVDSSKIIIRVNPEEINFDDPLDIGIDIYELRKFQRTNQKTCVNQRPIVRKGEKVEKGQIIADGHSTDRGELALGKDVLVAFMPWRGYNFEDAIVISERLVKEDVYTSIHIEELEVEARETKVGEEEITRQIPGVPERALAHLDEHGIVRVGTYVKPGDILVGKVTPKGETRLTPEEKLLQAIFGEKTRDVKDASLRCPPGVEGIVIDVQVFTRKGTGKKDMLAEKVEREELEALEQELEKKKNLIITGRDKVLKGLVLGRKVEKDAKVGRKTVKKGTVIDEKVFEEFVNYILGRPENFFEDEDLIRKIREIAERTRTQIEMLNKVYEEKKETLLKRRDLPPGVITLVKVFIANKRKIKVGDKMAGRHGNKGVISVVLPVEDMPFLPDGTPVDIVLNPLGVPSRMNVGQILETHLGWAAKELGKKIGEMIEKGRDRKAITEYLKEIFAIGDKDGENAKFIEEFLNSLSEEEFWSVVRDYAERGIPMATPAFEGAEEDAIKELLKKAGLPENGKTTLYDGRTGEPFDFEVTVGYMHMLKLIHMVDDKIHARATGPYSLVTQQPLGGRAQFGGQRLGEMEVWALEAHGAAYTLQEMLTVKSDDVEGRTKVYEAIVKGKYTYTPGIPESFKVLVRELKALGLNVKCLNGEEKPCDEVEVKEEEEK.

The protein belongs to the RNA polymerase beta chain family. The RNAP catalytic core consists of 2 alpha, 1 beta, 1 beta' and 1 omega subunit. When a sigma factor is associated with the core the holoenzyme is formed, which can initiate transcription.

It catalyses the reaction RNA(n) + a ribonucleoside 5'-triphosphate = RNA(n+1) + diphosphate. Its function is as follows. DNA-dependent RNA polymerase catalyzes the transcription of DNA into RNA using the four ribonucleoside triphosphates as substrates. The sequence is that of DNA-directed RNA polymerase subunit beta from Aquifex aeolicus (strain VF5).